Consider the following 341-residue polypeptide: Glycerol-3-phosphate dehydrogenase [NAD(P)+] (341 aa).

NADPH is bound by residues Ser-14, Phe-15, Arg-35, and Lys-108. 2 residues coordinate sn-glycerol 3-phosphate: Lys-108 and Gly-136. Ala-140 provides a ligand contact to NADPH. Sn-glycerol 3-phosphate is bound by residues Lys-191, Asp-244, Ser-254, Arg-255, and Asn-256. Lys-191 (proton acceptor) is an active-site residue. An NADPH-binding site is contributed by Arg-255. Positions 279 and 281 each coordinate NADPH.

It belongs to the NAD-dependent glycerol-3-phosphate dehydrogenase family.

Its subcellular location is the cytoplasm. The catalysed reaction is sn-glycerol 3-phosphate + NAD(+) = dihydroxyacetone phosphate + NADH + H(+). It catalyses the reaction sn-glycerol 3-phosphate + NADP(+) = dihydroxyacetone phosphate + NADPH + H(+). It functions in the pathway membrane lipid metabolism; glycerophospholipid metabolism. Functionally, catalyzes the reduction of the glycolytic intermediate dihydroxyacetone phosphate (DHAP) to sn-glycerol 3-phosphate (G3P), the key precursor for phospholipid synthesis. This is Glycerol-3-phosphate dehydrogenase [NAD(P)+] from Pseudomonas putida (strain ATCC 700007 / DSM 6899 / JCM 31910 / BCRC 17059 / LMG 24140 / F1).